The sequence spans 570 residues: Probable glucomannan 4-beta-mannosyltransferase 11 (570 aa).

The chain crosses the membrane as a helical span at residues 57–77 (LAMTVMILAEKLFVAAVCLAV). D157 is an active-site residue. Residues D216 and D218 each contribute to the substrate site. Residue D310 is part of the active site. 4 consecutive transmembrane segments (helical) span residues 389–409 (IAAH…SVWL), 412–432 (IEIP…CKAV), 522–542 (YSEI…VLYA), and 548–568 (IFLF…IGVC).

It belongs to the glycosyltransferase 2 family. Plant cellulose synthase-like A subfamily.

The protein resides in the golgi apparatus membrane. It catalyses the reaction GDP-mannose + (glucomannan)n = GDP + (glucomannan)n+1.. Its function is as follows. Probable mannan synthase which consists of a 4-beta-mannosyltransferase activity on mannan using GDP-mannose. The beta-1,4-mannan product is the backbone for galactomannan synthesis by galactomannan galactosyltransferase. Galactomannan is a noncellulosic polysaccharides of plant cell wall. The sequence is that of Probable glucomannan 4-beta-mannosyltransferase 11 from Oryza sativa subsp. japonica (Rice).